We begin with the raw amino-acid sequence, 371 residues long: dTDP-4-amino-4,6-dideoxy-D-glucose transaminase (371 aa).

At lysine 186 the chain carries N6-(pyridoxal phosphate)lysine.

Belongs to the DegT/DnrJ/EryC1 family. Requires pyridoxal 5'-phosphate as cofactor.

It catalyses the reaction dTDP-4-amino-4,6-dideoxy-D-glucose + 2-oxoglutarate = dTDP-4-dehydro-6-deoxy-alpha-D-glucose + L-glutamate. It participates in bacterial outer membrane biogenesis; lipopolysaccharide biosynthesis. Its function is as follows. Catalyzes the conversion of dTDP-4-dehydro-6-deoxy-D-glucose (dTDP-D-Glc4O) to dTDP-4-amino-4,6-dideoxy-D-glucose (dTDP-D-Qui4N). This is dTDP-4-amino-4,6-dideoxy-D-glucose transaminase (vioA) from Escherichia coli.